The following is a 134-amino-acid chain: Holo-[acyl-carrier-protein] synthase (134 aa).

Mg(2+) is bound by residues Asp8 and Glu57.

The protein belongs to the P-Pant transferase superfamily. AcpS family. Mg(2+) serves as cofactor.

Its subcellular location is the cytoplasm. The catalysed reaction is apo-[ACP] + CoA = holo-[ACP] + adenosine 3',5'-bisphosphate + H(+). Its function is as follows. Transfers the 4'-phosphopantetheine moiety from coenzyme A to a Ser of acyl-carrier-protein. In Rhizobium leguminosarum bv. trifolii (strain WSM2304), this protein is Holo-[acyl-carrier-protein] synthase.